The primary structure comprises 199 residues: Chaperone protein TorD (199 aa).

Belongs to the TorD/DmsD family. TorD subfamily.

The protein resides in the cytoplasm. Functionally, involved in the biogenesis of TorA. Acts on TorA before the insertion of the molybdenum cofactor and, as a result, probably favors a conformation of the apoenzyme that is competent for acquiring the cofactor. The chain is Chaperone protein TorD from Escherichia coli O157:H7 (strain EC4115 / EHEC).